The sequence spans 226 residues: MKLCVALDLSTKEECLQLTKELKNLDIWLKVGLRAYLRDGFKFIEELKKVDDFKIFLDLKIHDIPNTMADACEEISKLGIDMINIHASAGKIAMQEVMTRLSKFSKRPLVLAVSALTSFDEENFFSIYRQKIEEAVINFSKISYENGLDGMVCSVFESKIIKEHTQKNFLTLTPGIRPFGEKNDDQKRVANLTMARENLSDFIVVGRPIYKDNNPRKICEKILQEI.

Substrate contacts are provided by residues Asp-8, Lys-30, 58-67 (DLKIHDIPNT), Thr-117, Arg-177, Gln-186, Gly-206, and Arg-207. The active-site Proton donor is the Lys-60.

This sequence belongs to the OMP decarboxylase family. Type 1 subfamily. As to quaternary structure, homodimer.

It carries out the reaction orotidine 5'-phosphate + H(+) = UMP + CO2. Its pathway is pyrimidine metabolism; UMP biosynthesis via de novo pathway; UMP from orotate: step 2/2. Catalyzes the decarboxylation of orotidine 5'-monophosphate (OMP) to uridine 5'-monophosphate (UMP). In Campylobacter jejuni subsp. doylei (strain ATCC BAA-1458 / RM4099 / 269.97), this protein is Orotidine 5'-phosphate decarboxylase.